A 269-amino-acid polypeptide reads, in one-letter code: Shikimate dehydrogenase (NADP(+)) (269 aa).

Shikimate-binding positions include 14–16 and Thr60; that span reads TLS. Catalysis depends on Lys64, which acts as the Proton acceptor. NADP(+) is bound at residue Asp76. 2 residues coordinate shikimate: Asn85 and Asp100. NADP(+) contacts are provided by residues 122–126 and Met208; that span reads GAGGA. Tyr210 contributes to the shikimate binding site. An NADP(+)-binding site is contributed by Gly232.

Belongs to the shikimate dehydrogenase family. As to quaternary structure, homodimer.

The catalysed reaction is shikimate + NADP(+) = 3-dehydroshikimate + NADPH + H(+). The protein operates within metabolic intermediate biosynthesis; chorismate biosynthesis; chorismate from D-erythrose 4-phosphate and phosphoenolpyruvate: step 4/7. In terms of biological role, involved in the biosynthesis of the chorismate, which leads to the biosynthesis of aromatic amino acids. Catalyzes the reversible NADPH linked reduction of 3-dehydroshikimate (DHSA) to yield shikimate (SA). The sequence is that of Shikimate dehydrogenase (NADP(+)) from Caldivirga maquilingensis (strain ATCC 700844 / DSM 13496 / JCM 10307 / IC-167).